A 40-amino-acid chain; its full sequence is Photosystem II reaction center protein J (40 aa).

Residues 8 to 28 (IPLWLIGTVAGIPVIGSVGVF) form a helical membrane-spanning segment.

The protein belongs to the PsbJ family. PSII is composed of 1 copy each of membrane proteins PsbA, PsbB, PsbC, PsbD, PsbE, PsbF, PsbH, PsbI, PsbJ, PsbK, PsbL, PsbM, PsbT, PsbX, PsbY, PsbZ, Psb30/Ycf12, at least 3 peripheral proteins of the oxygen-evolving complex and a large number of cofactors. It forms dimeric complexes.

It is found in the plastid. The protein resides in the chloroplast thylakoid membrane. Its function is as follows. One of the components of the core complex of photosystem II (PSII). PSII is a light-driven water:plastoquinone oxidoreductase that uses light energy to abstract electrons from H(2)O, generating O(2) and a proton gradient subsequently used for ATP formation. It consists of a core antenna complex that captures photons, and an electron transfer chain that converts photonic excitation into a charge separation. This Acorus calamus (Sweet flag) protein is Photosystem II reaction center protein J.